The chain runs to 376 residues: Sulfate/thiosulfate import ATP-binding protein CysA (376 aa).

The ABC transporter domain maps to 3–237 (IRLDNISKHF…PNSRFVFDFF (235 aa)). 35-42 (GPSGSGKT) lines the ATP pocket.

The protein belongs to the ABC transporter superfamily. Sulfate/tungstate importer (TC 3.A.1.6) family. As to quaternary structure, the complex is composed of two ATP-binding proteins (CysA), two transmembrane proteins (CysT and CysW) and a solute-binding protein (CysP).

It is found in the cell inner membrane. The catalysed reaction is sulfate(out) + ATP + H2O = sulfate(in) + ADP + phosphate + H(+). It catalyses the reaction thiosulfate(out) + ATP + H2O = thiosulfate(in) + ADP + phosphate + H(+). Part of the ABC transporter complex CysAWTP involved in sulfate/thiosulfate import. Responsible for energy coupling to the transport system. This chain is Sulfate/thiosulfate import ATP-binding protein CysA, found in Vibrio cholerae serotype O1 (strain ATCC 39315 / El Tor Inaba N16961).